Consider the following 183-residue polypeptide: Protein AC4 (183 aa).

It belongs to the geminiviridae protein AC4/C4 family.

In terms of biological role, pathogenicity determinant. May act as a suppressor of RNA-mediated gene silencing, also known as post-transcriptional gene silencing (PTGS), a mechanism of plant viral defense that limits the accumulation of viral RNAs. This African cassava mosaic virus (isolate West Kenyan 844) (ACMV) protein is Protein AC4.